The chain runs to 299 residues: Protease HtpX homolog (299 aa).

2 consecutive transmembrane segments (helical) span residues 5-25 and 44-64; these read IFLF…VLSV and MVAL…MSLA. Position 155 (H155) interacts with Zn(2+). Residue E156 is part of the active site. Position 159 (H159) interacts with Zn(2+). 2 helical membrane passes run 170–190 and 205–225; these read LLQG…AWIA and FIAV…VVFA. E231 is a Zn(2+) binding site.

Belongs to the peptidase M48B family. Zn(2+) is required as a cofactor.

The protein localises to the cell membrane. This chain is Protease HtpX homolog, found in Bacillus pumilus (strain SAFR-032).